The chain runs to 316 residues: Transaldolase A (316 aa).

The active-site Schiff-base intermediate with substrate is the Lys-131.

It belongs to the transaldolase family. Type 1 subfamily. As to quaternary structure, homodimer.

It localises to the cytoplasm. It catalyses the reaction D-sedoheptulose 7-phosphate + D-glyceraldehyde 3-phosphate = D-erythrose 4-phosphate + beta-D-fructose 6-phosphate. Its pathway is carbohydrate degradation; pentose phosphate pathway; D-glyceraldehyde 3-phosphate and beta-D-fructose 6-phosphate from D-ribose 5-phosphate and D-xylulose 5-phosphate (non-oxidative stage): step 2/3. In terms of biological role, transaldolase is important for the balance of metabolites in the pentose-phosphate pathway. In Salmonella typhimurium (strain LT2 / SGSC1412 / ATCC 700720), this protein is Transaldolase A.